The chain runs to 151 residues: NPC intracellular cholesterol transporter 2 (151 aa).

An N-terminal signal peptide occupies residues 1–19; the sequence is MRFLAATFLLLALSTAAQA. Cystine bridges form between Cys27–Cys140, Cys42–Cys47, and Cys93–Cys99. Asn58 is a glycosylation site (N-linked (GlcNAc...) asparagine). Lys116 carries the N6-acetyllysine modification. A glycan (N-linked (GlcNAc...) asparagine) is linked at Asn135.

This sequence belongs to the NPC2 family. In terms of assembly, interacts with NPC1 (via the second lumenal domain) in a cholestrol-dependent manner. Interacts with NUS1/NgBR, the interaction stabilizes NCP2 and regulates cholesterol trafficking. Interacts with DHDDS. Interacts with NEDD4L (via C2 domain). Interacts with NPC1L1. Detected in gallbladder bile. Detected in fibroblasts, kidney, liver, spleen, small intestine, placenta and testis (at protein level). Epididymis.

It localises to the secreted. The protein resides in the endoplasmic reticulum. It is found in the lysosome. The enzyme catalyses cholesterol(in) = cholesterol(out). Functionally, intracellular cholesterol transporter which acts in concert with NPC1 and plays an important role in the egress of cholesterol from the lysosomal compartment. Unesterified cholesterol that has been released from LDLs in the lumen of the late endosomes/lysosomes is transferred by NPC2 to the cholesterol-binding pocket in the N-terminal domain of NPC1. May bind and mobilize cholesterol that is associated with membranes. NPC2 binds cholesterol with a 1:1 stoichiometry. Can bind a variety of sterols, including lathosterol, desmosterol and the plant sterols stigmasterol and beta-sitosterol. The secreted form of NCP2 regulates biliary cholesterol secretion via stimulation of ABCG5/ABCG8-mediated cholesterol transport. The sequence is that of NPC intracellular cholesterol transporter 2 from Homo sapiens (Human).